The following is a 378-amino-acid chain: RIB43A-like with coiled-coils protein 1 (378 aa).

Coiled coils occupy residues 153–250 (RMQQ…VTSD) and 279–334 (EQRA…CAEF).

The protein belongs to the RIB43A family. Microtubule inner protein component of sperm flagellar doublet microtubules.

The protein resides in the cytoplasm. It is found in the cytoskeleton. It localises to the flagellum axoneme. The chain is RIB43A-like with coiled-coils protein 1 (Ribc1) from Rattus norvegicus (Rat).